The following is a 1088-amino-acid chain: DNA ligase 4 (1088 aa).

2 disordered regions span residues 1 to 56 and 73 to 117; these read MALS…KFND and TTTT…TTTT. 2 stretches are compositionally biased toward low complexity: residues 25–53 and 73–90; these read DFKN…YNNK and TTTT…INKT. Positions 95–105 are enriched in acidic residues; it reads DDIFDDEDEDS. The ATP site is built by Glu-414, Lys-416, Arg-421, Glu-467, Phe-514, Glu-574, Lys-579, Lys-596, and Lys-598. Lys-416 serves as the catalytic N6-AMP-lysine intermediate. Position 467 (Glu-467) interacts with Mg(2+). A Mg(2+)-binding site is contributed by Glu-574. 2 BRCT domains span residues 827–917 and 984–1088; these read PTQN…PKYM and CWWS…EILD.

This sequence belongs to the ATP-dependent DNA ligase family. It depends on Mg(2+) as a cofactor.

It localises to the nucleus. It carries out the reaction ATP + (deoxyribonucleotide)n-3'-hydroxyl + 5'-phospho-(deoxyribonucleotide)m = (deoxyribonucleotide)n+m + AMP + diphosphate.. Functionally, DNA ligase involved in DNA non-homologous end joining (NHEJ); required for double-strand break (DSB) repair. In Dictyostelium discoideum (Social amoeba), this protein is DNA ligase 4 (lig4).